We begin with the raw amino-acid sequence, 99 residues long: Small ribosomal subunit protein bS20 (99 aa).

The protein belongs to the bacterial ribosomal protein bS20 family.

Functionally, binds directly to 16S ribosomal RNA. The protein is Small ribosomal subunit protein bS20 of Thermotoga neapolitana (strain ATCC 49049 / DSM 4359 / NBRC 107923 / NS-E).